The sequence spans 378 residues: RIB43A-like with coiled-coils protein 1 (378 aa).

Coiled-coil stretches lie at residues 153–250 (RMQQ…VTSD) and 279–334 (EQRA…CAEF).

Belongs to the RIB43A family. Microtubule inner protein component of sperm flagellar doublet microtubules.

It localises to the cytoplasm. The protein localises to the cytoskeleton. Its subcellular location is the flagellum axoneme. This chain is RIB43A-like with coiled-coils protein 1 (Ribc1), found in Rattus norvegicus (Rat).